The chain runs to 242 residues: tRNA (guanine-N(1)-)-methyltransferase (242 aa).

Residues Gly-114 and 134–139 (IGDFVL) contribute to the S-adenosyl-L-methionine site. Basic and acidic residues predominate over residues 223-233 (RRDLLPEHSKN). The tract at residues 223 to 242 (RRDLLPEHSKNNPEQTNKLS) is disordered.

This sequence belongs to the RNA methyltransferase TrmD family. Homodimer.

The protein resides in the cytoplasm. The catalysed reaction is guanosine(37) in tRNA + S-adenosyl-L-methionine = N(1)-methylguanosine(37) in tRNA + S-adenosyl-L-homocysteine + H(+). Functionally, specifically methylates guanosine-37 in various tRNAs. The protein is tRNA (guanine-N(1)-)-methyltransferase of Rhodopirellula baltica (strain DSM 10527 / NCIMB 13988 / SH1).